The sequence spans 316 residues: Apolipoprotein E (316 aa).

The N-terminal stretch at 1 to 18 (MKVLWVALVITLLAGCQA) is a signal peptide. Repeat copies occupy residues 79–100 (VLMD…GQLA), 101–122 (PIAQ…ARLA), 123–144 (SDME…AMMG), 145–166 (QTTD…KRLL), 167–188 (RDAE…EGSE), 189–210 (RSVS…ARAA), 211–232 (TVGT…QKLR), and 233–254 (GRVE…EQLE). The segment at 79–254 (VLMDETMKEV…HLEEMREQLE (176 aa)) is 8 X 22 AA approximate tandem repeats. Position 142 is a methionine sulfoxide (M142). Residues 157 to 167 (HLRKLRKRLLR) are LDL and other lipoprotein receptors binding. Heparin is bound at residue 161–164 (LRKR). Residues 209-289 (AATVGTLASQ…SWFEPLVEDM (81 aa)) form a lipid-binding and lipoprotein association region. Heparin is bound at residue 228–235 (HQKLRGRV). Residues 265–316 (SQMRLQAEAFQARLKSWFEPLVEDMQRQWAGLVEKVQLAMATSSTSAPSENH) are homooligomerization. The specificity for association with VLDL stretch occupies residues 277–289 (RLKSWFEPLVEDM).

It belongs to the apolipoprotein A1/A4/E family. In terms of assembly, homotetramer. May interact with ABCA1; functionally associated with ABCA1 in the biogenesis of HDLs. May interact with APP/A4 amyloid-beta peptide; the interaction is extremely stable in vitro but its physiological significance is unclear. May interact with MAPT. May interact with MAP2. In the cerebrospinal fluid, interacts with secreted SORL1. Interacts with PMEL; this allows the loading of PMEL luminal fragment on ILVs to induce fibril nucleation. In terms of processing, APOE exists as multiple glycosylated and sialylated glycoforms within cells and in plasma. The extent of glycosylation and sialylation are tissue and context specific. Post-translationally, glycated in plasma VLDL. Phosphorylated by FAM20C in the extracellular medium.

It localises to the secreted. Its subcellular location is the extracellular space. It is found in the extracellular matrix. The protein localises to the extracellular vesicle. The protein resides in the endosome. It localises to the multivesicular body. Its function is as follows. APOE is an apolipoprotein, a protein associating with lipid particles, that mainly functions in lipoprotein-mediated lipid transport between organs via the plasma and interstitial fluids. APOE is a core component of plasma lipoproteins and is involved in their production, conversion and clearance. Apolipoproteins are amphipathic molecules that interact both with lipids of the lipoprotein particle core and the aqueous environment of the plasma. As such, APOE associates with chylomicrons, chylomicron remnants, very low density lipoproteins (VLDL) and intermediate density lipoproteins (IDL) but shows a preferential binding to high-density lipoproteins (HDL). It also binds a wide range of cellular receptors including the LDL receptor/LDLR and the very low-density lipoprotein receptor/VLDLR that mediate the cellular uptake of the APOE-containing lipoprotein particles. Finally, APOE also has a heparin-binding activity and binds heparan-sulfate proteoglycans on the surface of cells, a property that supports the capture and the receptor-mediated uptake of APOE-containing lipoproteins by cells. The polypeptide is Apolipoprotein E (APOE) (Lipotes vexillifer (Yangtze river dolphin)).